The chain runs to 638 residues: 1-deoxy-D-xylulose-5-phosphate synthase (638 aa).

Thiamine diphosphate-binding positions include His71 and 112–114 (SHA). A Mg(2+)-binding site is contributed by Asp144. Thiamine diphosphate-binding positions include 145–146 (GA), Asn173, Tyr284, and Glu365. Asn173 provides a ligand contact to Mg(2+).

Belongs to the transketolase family. DXPS subfamily. Homodimer. Mg(2+) is required as a cofactor. Requires thiamine diphosphate as cofactor.

The catalysed reaction is D-glyceraldehyde 3-phosphate + pyruvate + H(+) = 1-deoxy-D-xylulose 5-phosphate + CO2. It participates in metabolic intermediate biosynthesis; 1-deoxy-D-xylulose 5-phosphate biosynthesis; 1-deoxy-D-xylulose 5-phosphate from D-glyceraldehyde 3-phosphate and pyruvate: step 1/1. Functionally, catalyzes the acyloin condensation reaction between C atoms 2 and 3 of pyruvate and glyceraldehyde 3-phosphate to yield 1-deoxy-D-xylulose-5-phosphate (DXP). The protein is 1-deoxy-D-xylulose-5-phosphate synthase of Mycobacterium sp. (strain KMS).